Here is a 1048-residue protein sequence, read N- to C-terminus: Nonsense-mediated mRNA decay protein 5 (1048 aa).

The Importin N-terminal domain maps to 24 to 104; sequence AETHLKNASK…KDMLIKTMVS (81 aa). Phosphoserine is present on S977.

In terms of assembly, GTP-bound Ran dissociates the isolated NMD5/TFIIS complex.

It localises to the nucleus. The protein resides in the cytoplasm. Functionally, active in protein import into the nucleus. Its major import substrate is transcription elongation factor TFIIS. This chain is Nonsense-mediated mRNA decay protein 5 (NMD5), found in Saccharomyces cerevisiae (strain ATCC 204508 / S288c) (Baker's yeast).